A 128-amino-acid polypeptide reads, in one-letter code: Gene 39 protein (128 aa).

The sequence is that of Gene 39 protein (39) from Mycobacterium (Mycobacteriophage D29).